The following is a 198-amino-acid chain: MMKKAEDPLQDREGTIQEHTEGQAGTAAADQSAAVETPESRIAGLEREVQAEKEQNGKFRDELLRRAAEFENFRKQKEREAVMASQRATDNVLRDLLTLVDDVERVLANVPEPEEIPAAAKPYIDGVELLKKNLDRWLESKGVKPIEAIGMKLDVDFHEAISQIEHPDAEPETIVEQYQTGYLLGDRVLRHAKVIVAR.

The segment covering 1–21 (MMKKAEDPLQDREGTIQEHTE) has biased composition (basic and acidic residues). Residues 1 to 56 (MMKKAEDPLQDREGTIQEHTEGQAGTAAADQSAAVETPESRIAGLEREVQAEKEQN) are disordered. Residues 22-34 (GQAGTAAADQSAA) are compositionally biased toward low complexity. Residues 44-56 (GLEREVQAEKEQN) show a composition bias toward basic and acidic residues.

This sequence belongs to the GrpE family. As to quaternary structure, homodimer.

The protein localises to the cytoplasm. Functionally, participates actively in the response to hyperosmotic and heat shock by preventing the aggregation of stress-denatured proteins, in association with DnaK and GrpE. It is the nucleotide exchange factor for DnaK and may function as a thermosensor. Unfolded proteins bind initially to DnaJ; upon interaction with the DnaJ-bound protein, DnaK hydrolyzes its bound ATP, resulting in the formation of a stable complex. GrpE releases ADP from DnaK; ATP binding to DnaK triggers the release of the substrate protein, thus completing the reaction cycle. Several rounds of ATP-dependent interactions between DnaJ, DnaK and GrpE are required for fully efficient folding. The chain is Protein GrpE from Chlorobium luteolum (strain DSM 273 / BCRC 81028 / 2530) (Pelodictyon luteolum).